Here is a 121-residue protein sequence, read N- to C-terminus: Neuromedin-B (121 aa).

The first 24 residues, M1–V24, serve as a signal peptide directing secretion. M56 carries the methionine amide modification. A propeptide spanning residues S60–K121 is cleaved from the precursor.

The protein belongs to the bombesin/neuromedin-B/ranatensin family.

It localises to the secreted. It is found in the cell projection. Its subcellular location is the neuron projection. Stimulates smooth muscle contraction. Induces sighing by acting directly on the pre-Botzinger complex, a cluster of several thousand neurons in the ventrolateral medulla responsible for inspiration during respiratory activity. Contributes to the induction of sneezing following exposure to chemical irritants or allergens which causes release of NMB by nasal sensory neurons and activation of NMBR-expressing neurons in the sneeze-evoking region of the brainstem. These in turn activate neurons of the caudal ventral respiratory group, giving rise to the sneezing response. Contributes to induction of acute itch, possibly through activation of the NMBR receptor on dorsal root ganglion neurons. Increases expression of NMBR and steroidogenic mediators STAR, CYP11A1 and HSD3B1 in Leydig cells, induces secretion of testosterone by Leydig cells and also promotes Leydig cell proliferation. Plays a role in the innate immune response to influenza A virus infection by enhancing interferon alpha expression and reducing expression of IL6. Plays a role in CSF1-induced proliferation of osteoclast precursors by contributing to the positive regulation of the expression of the CSF1 receptor CSF1R. This Homo sapiens (Human) protein is Neuromedin-B (NMB).